We begin with the raw amino-acid sequence, 264 residues long: Proteasome subunit beta type-4 (264 aa).

Met-1 carries the N-acetylmethionine modification. A propeptide spanning residues 1–45 (MEAFLGSRSGLWAGGPAPGQFYRIPSTPDSFMDPASALYRGPITR) is cleaved from the precursor. Ser-26 carries the post-translational modification Phosphoserine. Tyr-102 bears the Phosphotyrosine mark.

Belongs to the peptidase T1B family. The 26S proteasome consists of a 20S proteasome core and two 19S regulatory subunits. The 20S proteasome core is a barrel-shaped complex made of 28 subunits that are arranged in four stacked rings. The two outer rings are each formed by seven alpha subunits, and the two inner rings are formed by seven beta subunits. The proteolytic activity is exerted by three beta-subunits PSMB5, PSMB6 and PSMB7. Forms a ternary complex with SMAD1 and OAZ1 before PSMB4 is incorporated into the 20S proteasome. Interacts with PRPF19. As to quaternary structure, (Microbial infection) Interacts with HTLV-1 Tax protein. In terms of assembly, (Microbial infection) Interacts with HIV-1 Nef and Tat proteins.

Its subcellular location is the cytoplasm. The protein resides in the nucleus. In terms of biological role, non-catalytic component of the 20S core proteasome complex involved in the proteolytic degradation of most intracellular proteins. This complex plays numerous essential roles within the cell by associating with different regulatory particles. Associated with two 19S regulatory particles, forms the 26S proteasome and thus participates in the ATP-dependent degradation of ubiquitinated proteins. The 26S proteasome plays a key role in the maintenance of protein homeostasis by removing misfolded or damaged proteins that could impair cellular functions, and by removing proteins whose functions are no longer required. Associated with the PA200 or PA28, the 20S proteasome mediates ubiquitin-independent protein degradation. This type of proteolysis is required in several pathways including spermatogenesis (20S-PA200 complex) or generation of a subset of MHC class I-presented antigenic peptides (20S-PA28 complex). SMAD1/OAZ1/PSMB4 complex mediates the degradation of the CREBBP/EP300 repressor SNIP1. This Homo sapiens (Human) protein is Proteasome subunit beta type-4.